The primary structure comprises 655 residues: NACHT, LRR and PYD domains-containing protein 10 (655 aa).

A Pyrin domain is found at 1–96; that stretch reads MAMAKARKPR…VDQLSHICLH (96 aa). The NACHT domain maps to 167-484; it reads SLVVLQGSAG…AMSYLVKEDQ (318 aa). 173–180 serves as a coordination point for ATP; it reads GSAGTGKT. Residues 597-609 show a composition bias toward polar residues; it reads QSQNLFSVKSSLS. The disordered stretch occupies residues 597-655; that stretch reads QSQNLFSVKSSLSHGPKEEQKCPSVHGQKEGKDNIAGTQKEASTGKGRGTEETPKNTYI. Composition is skewed to basic and acidic residues over residues 611-629 and 644-655; these read GPKE…EGKD and RGTEETPKNTYI.

This sequence belongs to the NLRP family. As to quaternary structure, oligomerizes. Interacts with PYCARD. Also interacts with CASP1 and IL1B. Interacts with NOD1 and components of the NOD1 signaling pathway including RIPK2, NR2C2/TAK1 and IKBKG/NEMO. As to expression, highly expressed in basal and suprabasal epidermal cell layers with lower levels in dermal fibroblast cells (at protein level). Widely expressed with highest levels in heart, brain and skeletal muscle. Also expressed in liver, colon, dermis and epidermis. Little expression detected in myeloid cells or peripheral blood mononuclear cells.

Its subcellular location is the cytoplasm. The protein resides in the cell membrane. Inhibits autoprocessing of CASP1, CASP1-dependent IL1B secretion, PYCARD aggregation and PYCARD-mediated apoptosis but not apoptosis induced by FAS or BID. Displays anti-inflammatory activity. Required for immunity against C.albicans infection. Involved in the innate immune response by contributing to pro-inflammatory cytokine release in response to invasive bacterial infection. Contributes to T-cell-mediated inflammatory responses in the skin. Plays a role in protection against periodontitis through its involvement in induction of IL1A via ERK activation in oral epithelial cells infected with periodontal pathogens. Exhibits both ATPase and GTPase activities. In Homo sapiens (Human), this protein is NACHT, LRR and PYD domains-containing protein 10 (NLRP10).